The following is a 331-amino-acid chain: uncharacterized protein (331 aa).

43-50 (GANESGKS) serves as a coordination point for ATP.

This is an uncharacterized protein from Methanocaldococcus jannaschii (strain ATCC 43067 / DSM 2661 / JAL-1 / JCM 10045 / NBRC 100440) (Methanococcus jannaschii).